A 161-amino-acid chain; its full sequence is TRAF-interacting protein with FHA domain-containing protein B (161 aa).

In terms of domain architecture, FHA spans 36–91 (LLLGRGQDAHLQLQLPRLSRRHLSLEPYLEKGSALLAFCLKALSRKGCVWVNGLTL).

In terms of assembly, interacts with TIFA.

In terms of biological role, inhibits TIFA-mediated TRAF6 activation possibly by inducing a conformational change in TIFA. This chain is TRAF-interacting protein with FHA domain-containing protein B, found in Homo sapiens (Human).